A 90-amino-acid polypeptide reads, in one-letter code: MTRTVMCRKYKEELPGLERAPYPGAKGEDIFNHVSQKAWADWQKHQTLLINERRLNMMNAEDRKFLQTEMDKFLSGEEYAQAEGYVPPEK.

The protein belongs to the Fe(2+)-trafficking protein family.

Functionally, could be a mediator in iron transactions between iron acquisition and iron-requiring processes, such as synthesis and/or repair of Fe-S clusters in biosynthetic enzymes. The polypeptide is Probable Fe(2+)-trafficking protein (Pseudomonas syringae pv. tomato (strain ATCC BAA-871 / DC3000)).